Here is a 143-residue protein sequence, read N- to C-terminus: Large ribosomal subunit protein uL11 (143 aa).

It belongs to the universal ribosomal protein uL11 family. In terms of assembly, part of the ribosomal stalk of the 50S ribosomal subunit. Interacts with L10 and the large rRNA to form the base of the stalk. L10 forms an elongated spine to which L12 dimers bind in a sequential fashion forming a multimeric L10(L12)X complex. Post-translationally, one or more lysine residues are methylated.

Its function is as follows. Forms part of the ribosomal stalk which helps the ribosome interact with GTP-bound translation factors. The sequence is that of Large ribosomal subunit protein uL11 from Paraburkholderia phymatum (strain DSM 17167 / CIP 108236 / LMG 21445 / STM815) (Burkholderia phymatum).